The sequence spans 386 residues: MNIHEYQAKEILRKYGVPTSTGLVVTKTEKINETIDKLNTEVYVVKAQIHAGGRGKAGGVKVVKSKEEAKKVAHDMFGINLVTHQTGPQGQKVNRLYIESGCDILKEYYFSIVFDRLASCITFIASTEGGVDIEEVAEKTPEKIVKFSVDPATGLQDFHMRGIAYELGFKDNQAKQMKEIVKSVYNAFVETDAAQIEINPLIVQTDGNLLALDAKITFDDNGLFKHPNITAMRDHDEEDPLETRAANAGLSYVKMDGNIGCMVNGAGLAMATMDIIKLYGASPANFLDVGGGADRERVKEALKIILSDKEVQGILVNIFGGIMRCDIIAEGIIAAAKDIGIKVPLVVRLAGTNVEKGKEILSNSGLEIIPAHDLADAANKIVEAIR.

Positions 9-244 (KEILRKYGVP…HDEEDPLETR (236 aa)) constitute an ATP-grasp domain. ATP is bound by residues K46, 53 to 55 (GRG), E99, C102, and E107. Mg(2+) contacts are provided by N199 and D213. Substrate-binding positions include N264 and 321-323 (GIM).

It belongs to the succinate/malate CoA ligase beta subunit family. As to quaternary structure, heterotetramer of two alpha and two beta subunits. It depends on Mg(2+) as a cofactor.

It catalyses the reaction succinate + ATP + CoA = succinyl-CoA + ADP + phosphate. The catalysed reaction is GTP + succinate + CoA = succinyl-CoA + GDP + phosphate. It participates in carbohydrate metabolism; tricarboxylic acid cycle; succinate from succinyl-CoA (ligase route): step 1/1. In terms of biological role, succinyl-CoA synthetase functions in the citric acid cycle (TCA), coupling the hydrolysis of succinyl-CoA to the synthesis of either ATP or GTP and thus represents the only step of substrate-level phosphorylation in the TCA. The beta subunit provides nucleotide specificity of the enzyme and binds the substrate succinate, while the binding sites for coenzyme A and phosphate are found in the alpha subunit. This is Succinate--CoA ligase [ADP-forming] subunit beta from Rickettsia felis (strain ATCC VR-1525 / URRWXCal2) (Rickettsia azadi).